The primary structure comprises 318 residues: Thymidylate synthase (318 aa).

DUMP contacts are provided by residues arginine 25 and 180–181; that span reads RR. Cysteine 200 serves as the catalytic Nucleophile. Residues 220–223, asparagine 231, and 261–263 contribute to the dUMP site; these read RSGD and HIY. Residue aspartate 223 coordinates (6R)-5,10-methylene-5,6,7,8-tetrahydrofolate. Alanine 317 serves as a coordination point for (6R)-5,10-methylene-5,6,7,8-tetrahydrofolate.

This sequence belongs to the thymidylate synthase family. Bacterial-type ThyA subfamily. In terms of assembly, homodimer.

The protein resides in the cytoplasm. It carries out the reaction dUMP + (6R)-5,10-methylene-5,6,7,8-tetrahydrofolate = 7,8-dihydrofolate + dTMP. Its pathway is pyrimidine metabolism; dTTP biosynthesis. In terms of biological role, catalyzes the reductive methylation of 2'-deoxyuridine-5'-monophosphate (dUMP) to 2'-deoxythymidine-5'-monophosphate (dTMP) while utilizing 5,10-methylenetetrahydrofolate (mTHF) as the methyl donor and reductant in the reaction, yielding dihydrofolate (DHF) as a by-product. This enzymatic reaction provides an intracellular de novo source of dTMP, an essential precursor for DNA biosynthesis. This chain is Thymidylate synthase, found in Bacillus cytotoxicus (strain DSM 22905 / CIP 110041 / 391-98 / NVH 391-98).